Consider the following 427-residue polypeptide: Trigger factor (427 aa).

The region spanning 163 to 248 (GDIVVIDFAG…LKEIKRKELA (86 aa)) is the PPIase FKBP-type domain.

Belongs to the FKBP-type PPIase family. Tig subfamily.

It localises to the cytoplasm. The catalysed reaction is [protein]-peptidylproline (omega=180) = [protein]-peptidylproline (omega=0). Functionally, involved in protein export. Acts as a chaperone by maintaining the newly synthesized protein in an open conformation. Functions as a peptidyl-prolyl cis-trans isomerase. This is Trigger factor from Carboxydothermus hydrogenoformans (strain ATCC BAA-161 / DSM 6008 / Z-2901).